The following is a 165-amino-acid chain: uncharacterized protein (165 aa).

Residues 15-35 (MSPAIILIGVLILIVLFVIKF) traverse the membrane as a helical segment. The stretch at 67–119 (ISQLNTLRATLAAKKKELKTLRTARKKECTEQLAKTQAEVDRIQAKIDNFSSR) forms a coiled coil. A disordered region spans residues 123 to 156 (VPLPGGEVGPPYNPPPPRTNTRPNPRPNPRPAQL). The span at 133 to 154 (PYNPPPPRTNTRPNPRPNPRPA) shows a compositional bias: pro residues.

Its subcellular location is the membrane. This is an uncharacterized protein from Acheta domesticus (House cricket).